The following is a 139-amino-acid chain: uncharacterized protein (139 aa).

This is an uncharacterized protein from Dryophytes versicolor (chameleon treefrog).